A 355-amino-acid polypeptide reads, in one-letter code: 3-dehydroquinate synthase (355 aa).

NAD(+) is bound by residues 71 to 76 (EGEASK), 105 to 109 (GVVGD), 129 to 130 (TS), Lys-142, and Lys-151. Zn(2+) is bound by residues Glu-184, His-246, and His-263.

The protein belongs to the sugar phosphate cyclases superfamily. Dehydroquinate synthase family. The cofactor is Co(2+). Zn(2+) is required as a cofactor. It depends on NAD(+) as a cofactor.

Its subcellular location is the cytoplasm. The enzyme catalyses 7-phospho-2-dehydro-3-deoxy-D-arabino-heptonate = 3-dehydroquinate + phosphate. The protein operates within metabolic intermediate biosynthesis; chorismate biosynthesis; chorismate from D-erythrose 4-phosphate and phosphoenolpyruvate: step 2/7. Catalyzes the conversion of 3-deoxy-D-arabino-heptulosonate 7-phosphate (DAHP) to dehydroquinate (DHQ). The polypeptide is 3-dehydroquinate synthase (Streptococcus gordonii (strain Challis / ATCC 35105 / BCRC 15272 / CH1 / DL1 / V288)).